A 481-amino-acid chain; its full sequence is Proline--tRNA ligase (481 aa).

This sequence belongs to the class-II aminoacyl-tRNA synthetase family. ProS type 3 subfamily. As to quaternary structure, homodimer.

Its subcellular location is the cytoplasm. It carries out the reaction tRNA(Pro) + L-proline + ATP = L-prolyl-tRNA(Pro) + AMP + diphosphate. Functionally, catalyzes the attachment of proline to tRNA(Pro) in a two-step reaction: proline is first activated by ATP to form Pro-AMP and then transferred to the acceptor end of tRNA(Pro). This is Proline--tRNA ligase from Chlorobium limicola (strain DSM 245 / NBRC 103803 / 6330).